Here is a 333-residue protein sequence, read N- to C-terminus: tRNA(Ile)-lysidine synthase (333 aa).

Residue 33-38 (SGGADS) participates in ATP binding.

This sequence belongs to the tRNA(Ile)-lysidine synthase family.

Its subcellular location is the cytoplasm. It catalyses the reaction cytidine(34) in tRNA(Ile2) + L-lysine + ATP = lysidine(34) in tRNA(Ile2) + AMP + diphosphate + H(+). Its function is as follows. Ligates lysine onto the cytidine present at position 34 of the AUA codon-specific tRNA(Ile) that contains the anticodon CAU, in an ATP-dependent manner. Cytidine is converted to lysidine, thus changing the amino acid specificity of the tRNA from methionine to isoleucine. The polypeptide is tRNA(Ile)-lysidine synthase (Salinispora arenicola (strain CNS-205)).